The primary structure comprises 287 residues: 4-hydroxybenzoate octaprenyltransferase (287 aa).

A run of 6 helical transmembrane segments spans residues 41-61, 89-109, 133-153, 158-178, 202-224, and 267-287; these read WPLLVIFSLGTLLMRSAGCAM, WEAIAIAVGLAFVSFLLILPL, FFAIPQAYLGIAFGFGIPMAF, DTVPTIAWVMLIANIFWSVAY, FGRFDVAAVMLCYAVTLGIYVWI, and NNWLGGVLFAGIAAHYLLAGS.

The protein belongs to the UbiA prenyltransferase family. The cofactor is Mg(2+).

The protein resides in the cell inner membrane. It catalyses the reaction all-trans-octaprenyl diphosphate + 4-hydroxybenzoate = 4-hydroxy-3-(all-trans-octaprenyl)benzoate + diphosphate. Its pathway is cofactor biosynthesis; ubiquinone biosynthesis. Its function is as follows. Catalyzes the prenylation of para-hydroxybenzoate (PHB) with an all-trans polyprenyl group. Mediates the second step in the final reaction sequence of ubiquinone-8 (UQ-8) biosynthesis, which is the condensation of the polyisoprenoid side chain with PHB, generating the first membrane-bound Q intermediate 3-octaprenyl-4-hydroxybenzoate. The protein is 4-hydroxybenzoate octaprenyltransferase of Burkholderia lata (strain ATCC 17760 / DSM 23089 / LMG 22485 / NCIMB 9086 / R18194 / 383).